Here is a 409-residue protein sequence, read N- to C-terminus: Glycinol 4-dimethylallyltransferase (409 aa).

A chloroplast-targeting transit peptide spans Met1 to Arg44. 9 helical membrane passes run Leu113 to Phe133, Leu148 to Leu168, Val200 to Trp220, Leu222 to Leu242, Pro249 to Phe269, Leu287 to Ile307, Ala330 to Ala350, His354 to Tyr374, and Gly388 to Ile408.

It belongs to the UbiA prenyltransferase family. Mg(2+) is required as a cofactor. Mn(2+) serves as cofactor. It depends on Co(2+) as a cofactor.

Its subcellular location is the plastid. The protein resides in the chloroplast membrane. The catalysed reaction is (6aS,11aS)-3,6a,9-trihydroxypterocarpan + dimethylallyl diphosphate = (6aS,11aS)-2-dimethylallyl-3,6a,9-trihydroxypterocarpan + diphosphate. It catalyses the reaction (6aS,11aS)-3,6a,9-trihydroxypterocarpan + dimethylallyl diphosphate = (6aS,11aS)-4-dimethylallyl-3,6a,9-trihydroxypterocarpan + diphosphate. It participates in phytoalexin biosynthesis; pterocarpan phytoalexin biosynthesis. Functionally, proposed to be involved in the biosynthesis of pterocarpan phytoalexins, specifically glyceollins. Can act as a prenyltransferase towards glycinol which is the direct precursor of glyceollins. Seems to be specific for prenylation at C-4 thus producing glyceollin I. This is Glycinol 4-dimethylallyltransferase (G4DT) from Glycine max (Soybean).